The following is a 130-amino-acid chain: MMTRPRIALIAHDHKKDDIVAFATRHREFLSQCELLATGTTGGRLIDEVKLDVTRMLSGPWGGDLQIGAQLAEGRVRAVIFLRDPMTPQPHEPDINALVRACDVHNVPCATNVATADLLIAELSRVEAQP.

An MGS-like domain is found at 1–130 (MMTRPRIALI…AELSRVEAQP (130 aa)). Substrate contacts are provided by residues His12, Lys16, 38–41 (TGTT), and 58–59 (SG). Asp64 acts as the Proton donor/acceptor in catalysis. His91 lines the substrate pocket.

The protein belongs to the methylglyoxal synthase family.

It catalyses the reaction dihydroxyacetone phosphate = methylglyoxal + phosphate. In terms of biological role, catalyzes the formation of methylglyoxal from dihydroxyacetone phosphate. This chain is Methylglyoxal synthase, found in Cupriavidus pinatubonensis (strain JMP 134 / LMG 1197) (Cupriavidus necator (strain JMP 134)).